A 299-amino-acid polypeptide reads, in one-letter code: Taste receptor type 2 member 4 (299 aa).

The Extracellular segment spans residues 1 to 9 (MLRLFYFSA). A helical transmembrane segment spans residues 10-30 (IIASVILNFVGIIMNLFITVV). Topologically, residues 31–46 (NCKTWVKSHRISSSDR) are cytoplasmic. The helical transmembrane segment at 47–67 (ILFSLGITRFLMLGLFLVNTI) threads the bilayer. Topologically, residues 68 to 81 (YFVSSNXERSVYLS) are extracellular. Residues 82–102 (AFFVLCFMFLDSSSLWFVTLL) form a helical membrane-spanning segment. Residues 103–131 (NILYCVKITNFQHSVFLLLKRNISPKIPR) are Cytoplasmic-facing. Residues 132 to 152 (LLLACVLISAFTTCLYITLSQ) traverse the membrane as a helical segment. Residues 153–172 (ASPFPELVTTRNNTSFNINE) lie on the Extracellular side of the membrane. Residues asparagine 164 and asparagine 165 are each glycosylated (N-linked (GlcNAc...) asparagine). Residues 173 to 193 (GILSLVVSLVLSSSLQFIINV) traverse the membrane as a helical segment. The Cytoplasmic portion of the chain corresponds to 194-230 (TSASLLIHSLRRHIQKMQKNATGFWNPQTEAHVGAMK). The helical transmembrane segment at 231–251 (LMVYFLILYIPYSVATLVQYL) threads the bilayer. Topologically, residues 252-262 (PFYAGMDMGTK) are extracellular. The helical transmembrane segment at 263–283 (SICLIFATLYSPGHSVLIIIT) threads the bilayer. The Cytoplasmic segment spans residues 284–299 (HPKLKTTAKKILCFKK).

This sequence belongs to the G-protein coupled receptor T2R family.

Its subcellular location is the membrane. The protein resides in the cell projection. It is found in the cilium membrane. Gustducin-coupled receptor implicated in the perception of bitter compounds in the oral cavity and the gastrointestinal tract. Signals through PLCB2 and the calcium-regulated cation channel TRPM5. In airway epithelial cells, binding of denatonium increases the intracellular calcium ion concentration and stimulates ciliary beat frequency. The polypeptide is Taste receptor type 2 member 4 (TAS2R4) (Pan troglodytes (Chimpanzee)).